The primary structure comprises 409 residues: Putative competence-damage inducible protein (409 aa).

The protein belongs to the CinA family.

The polypeptide is Putative competence-damage inducible protein (Clostridium tetani (strain Massachusetts / E88)).